We begin with the raw amino-acid sequence, 282 residues long: Ribosomal RNA small subunit methyltransferase A (282 aa).

6 residues coordinate S-adenosyl-L-methionine: histidine 11, leucine 13, glycine 44, glutamate 65, aspartate 90, and asparagine 106.

Belongs to the class I-like SAM-binding methyltransferase superfamily. rRNA adenine N(6)-methyltransferase family. RsmA subfamily.

It localises to the cytoplasm. It catalyses the reaction adenosine(1518)/adenosine(1519) in 16S rRNA + 4 S-adenosyl-L-methionine = N(6)-dimethyladenosine(1518)/N(6)-dimethyladenosine(1519) in 16S rRNA + 4 S-adenosyl-L-homocysteine + 4 H(+). Its function is as follows. Specifically dimethylates two adjacent adenosines (A1518 and A1519) in the loop of a conserved hairpin near the 3'-end of 16S rRNA in the 30S particle. May play a critical role in biogenesis of 30S subunits. The chain is Ribosomal RNA small subunit methyltransferase A from Synechococcus sp. (strain JA-2-3B'a(2-13)) (Cyanobacteria bacterium Yellowstone B-Prime).